Consider the following 462-residue polypeptide: Elongation factor 1-alpha 1 (462 aa).

Gly2 is subject to N,N,N-trimethylglycine. The tr-type G domain occupies 5 to 242 (KTHINIVVIG…DCILPPTRPT (238 aa)). The tract at residues 14–21 (GHVDSGKS) is G1. 14 to 21 (GHVDSGKS) provides a ligand contact to GTP. Lys36 carries the post-translational modification N6,N6,N6-trimethyllysine; alternate. Lys36 carries the N6,N6-dimethyllysine; alternate modification. Lys36 bears the N6-methyllysine; alternate mark. An N6,N6-dimethyllysine modification is found at Lys55. The segment at 70–74 (GITID) is G2. Lys79 bears the N6,N6,N6-trimethyllysine; by EEF1AKMT1 mark. Residues 91–94 (DAPG) are G3. 153 to 156 (NKMD) contributes to the GTP binding site. The G4 stretch occupies residues 153 to 156 (NKMD). Lys165 is subject to N6,N6,N6-trimethyllysine; alternate; by EEF1AKMT3. Lys165 bears the N6,N6-dimethyllysine; alternate; by EEF1AKMT3 mark. Lys165 carries the post-translational modification N6-acetyllysine; alternate. Lys165 carries the N6-methyllysine; alternate; by EEF1AKMT3 modification. N6-acetyllysine is present on Lys172. 194 to 196 (SGW) serves as a coordination point for GTP. A G5 region spans residues 194 to 196 (SGW). The residue at position 273 (Lys273) is an N6-acetyllysine. Ser300 carries the phosphoserine; by TGFBR1 modification. At Glu301 the chain carries 5-glutamyl glycerylphosphorylethanolamine. The residue at position 318 (Lys318) is an N6,N6,N6-trimethyllysine; by EEF1AKMT2. Glu374 is subject to 5-glutamyl glycerylphosphorylethanolamine. Residue Lys385 forms a Glycyl lysine isopeptide (Lys-Gly) (interchain with G-Cter in ubiquitin) linkage. Position 392 is an N6-acetyllysine; alternate (Lys392). An N6-succinyllysine; alternate modification is found at Lys392. Phosphothreonine; by PASK is present on Thr432. Residue Lys439 is modified to N6-acetyllysine.

It belongs to the TRAFAC class translation factor GTPase superfamily. Classic translation factor GTPase family. EF-Tu/EF-1A subfamily. Found in a nuclear export complex with XPO5, EEF1A1, Ran and aminoacylated tRNA. Interacts with PARP1 and TXK. Interacts with KARS1. May interact with ERGIC2. Interacts with IFIT1 (via TPR repeats 4-7). Interacts with DLC1, facilitating distribution to the membrane periphery and ruffles upon growth factor stimulation. Interacts with ZPR1; the interaction occurs in a epidermal growth factor (EGF)-dependent manner. Interacts with PPP1R16B. Interacts with SPHK1 and SPHK2; both interactions increase SPHK1 and SPHK2 kinase activity. Interacts with guanyl-nucleotide exchange factor EEF1B2. Interacts (via middle-region) with HTATIP2 (via N-terminus); the interaction is direct and competes with EEF1A1 binding to guanyl-nucleotide exchange factor EEF1B2, thereby inhibiting GDP for GTP exchange and reactivation of EEF1A1. Interacts with tRNA. Post-translationally, ISGylated. Phosphorylated by TXK. Phosphorylation by PASK increases translation efficiency. Phosphorylated by ROCK2. Phosphorylation by TGFBR1 inhibits translation elongation. In terms of processing, trimethylated at Lys-79 by EEF1AKMT1. Methylated at Lys-165 by EEF1AKMT3, methylation by EEF1AKMT3 is dynamic as well as inducible by stress conditions, such as ER-stress, and plays a regulatory role on mRNA translation. Trimethylated at Lys-318 by EEF1AKMT2. Mono-, di-, and trimethylated at Lys-36 by EEF1AKMT4; trimethylated form is predominant. Methylation by EEF1AKMT4 contributes to the fine-tuning of translation rates for a subset of tRNAs. Trimethylated at Gly-2 by METTL13. Mono- and dimethylated at Lys-55 by METTL13; dimethylated form is predominant. Post-translationally, ubiquitinated at Lys-385 by RNF14 in response to ribosome collisions (ribosome stalling), leading to its degradation by the proteasome and rescue of stalled ribosomes.

The protein resides in the cytoplasm. It is found in the nucleus. It localises to the nucleolus. The protein localises to the cell membrane. It carries out the reaction GTP + H2O = GDP + phosphate + H(+). Functionally, translation elongation factor that catalyzes the GTP-dependent binding of aminoacyl-tRNA (aa-tRNA) to the A-site of ribosomes during the elongation phase of protein synthesis. Base pairing between the mRNA codon and the aa-tRNA anticodon promotes GTP hydrolysis, releasing the aa-tRNA from EEF1A1 and allowing its accommodation into the ribosome. The growing protein chain is subsequently transferred from the P-site peptidyl tRNA to the A-site aa-tRNA, extending it by one amino acid through ribosome-catalyzed peptide bond formation. Also plays a role in the positive regulation of IFNG transcription in T-helper 1 cells as part of an IFNG promoter-binding complex with TXK and PARP1. Also plays a role in cytoskeleton organization by promoting actin bundling. This Equus caballus (Horse) protein is Elongation factor 1-alpha 1 (EEF1A1).